The chain runs to 278 residues: TATA box-binding protein-associated factor RNA polymerase I subunit D (278 aa).

Disordered stretches follow at residues 20 to 71 (ANRS…SSFE) and 88 to 116 (KKRYKKKKKRRYQPTGRPRGRPEGRRNPI). Positions 22 to 33 (RSDNSSDSSLFK) are enriched in polar residues. Phosphoserine is present on S23. Over residues 88–99 (KKRYKKKKKRRY) the composition is skewed to basic residues. Residues S138 and S234 each carry the phosphoserine modification.

Component of the transcription factor SL1/TIF-IB complex, composed of TBP and at least TAF1A, TAF1B, TAF1C and TAF1D. Interacts with UBTF.

It is found in the nucleus. Functionally, component of the transcription factor SL1/TIF-IB complex, which is involved in the assembly of the PIC (preinitiation complex) during RNA polymerase I-dependent transcription. The rate of PIC formation probably is primarily dependent on the rate of association of SL1/TIF-IB with the rDNA promoter. SL1/TIF-IB is involved in stabilization of nucleolar transcription factor 1/UBTF on rDNA. Formation of SL1/TIF-IB excludes the association of TBP with TFIID subunits. In Homo sapiens (Human), this protein is TATA box-binding protein-associated factor RNA polymerase I subunit D (TAF1D).